The following is a 176-amino-acid chain: Crossover junction endodeoxyribonuclease RuvC (176 aa).

Residues Asp8, Glu69, and Asp141 contribute to the active site. The Mg(2+) site is built by Asp8, Glu69, and Asp141.

It belongs to the RuvC family. Homodimer which binds Holliday junction (HJ) DNA. The HJ becomes 2-fold symmetrical on binding to RuvC with unstacked arms; it has a different conformation from HJ DNA in complex with RuvA. In the full resolvosome a probable DNA-RuvA(4)-RuvB(12)-RuvC(2) complex forms which resolves the HJ. It depends on Mg(2+) as a cofactor.

The protein resides in the cytoplasm. The catalysed reaction is Endonucleolytic cleavage at a junction such as a reciprocal single-stranded crossover between two homologous DNA duplexes (Holliday junction).. In terms of biological role, the RuvA-RuvB-RuvC complex processes Holliday junction (HJ) DNA during genetic recombination and DNA repair. Endonuclease that resolves HJ intermediates. Cleaves cruciform DNA by making single-stranded nicks across the HJ at symmetrical positions within the homologous arms, yielding a 5'-phosphate and a 3'-hydroxyl group; requires a central core of homology in the junction. The consensus cleavage sequence is 5'-(A/T)TT(C/G)-3'. Cleavage occurs on the 3'-side of the TT dinucleotide at the point of strand exchange. HJ branch migration catalyzed by RuvA-RuvB allows RuvC to scan DNA until it finds its consensus sequence, where it cleaves and resolves the cruciform DNA. The chain is Crossover junction endodeoxyribonuclease RuvC from Pseudomonas syringae pv. tomato (strain ATCC BAA-871 / DC3000).